We begin with the raw amino-acid sequence, 280 residues long: Urease accessory protein UreD 3 (280 aa).

It belongs to the UreD family. UreD, UreF and UreG form a complex that acts as a GTP-hydrolysis-dependent molecular chaperone, activating the urease apoprotein by helping to assemble the nickel containing metallocenter of UreC. The UreE protein probably delivers the nickel.

It is found in the cytoplasm. Its function is as follows. Required for maturation of urease via the functional incorporation of the urease nickel metallocenter. This Bradyrhizobium sp. (strain ORS 278) protein is Urease accessory protein UreD 3.